We begin with the raw amino-acid sequence, 547 residues long: Chaperonin GroEL (547 aa).

ATP-binding positions include 30–33, Lys-51, 87–91, Gly-415, and Asp-496; these read TLGP and DGTTT. Positions 528–547 are disordered; it reads KEGAGAGGGMPDMGGMGGMM. Over residues 531–547 the composition is skewed to gly residues; that stretch reads AGAGGGMPDMGGMGGMM.

This sequence belongs to the chaperonin (HSP60) family. In terms of assembly, forms a cylinder of 14 subunits composed of two heptameric rings stacked back-to-back. Interacts with the co-chaperonin GroES.

Its subcellular location is the cytoplasm. The catalysed reaction is ATP + H2O + a folded polypeptide = ADP + phosphate + an unfolded polypeptide.. Together with its co-chaperonin GroES, plays an essential role in assisting protein folding. The GroEL-GroES system forms a nano-cage that allows encapsulation of the non-native substrate proteins and provides a physical environment optimized to promote and accelerate protein folding. This Dinoroseobacter shibae (strain DSM 16493 / NCIMB 14021 / DFL 12) protein is Chaperonin GroEL.